The sequence spans 355 residues: NAD-dependent protein deacylase sirtuin-6 (355 aa).

Position 2 is an N-acetylserine (Ser-2). A Phosphoserine modification is found at Ser-10. In terms of domain architecture, Deacetylase sirtuin-type spans 27–272 (PEELERKVWE…TQLMKHLGLE (246 aa)). The residue at position 33 (Lys-33) is an N6-acetyllysine. Residues Ala-53, Thr-57, Phe-64, Arg-65, Trp-71, Gln-113, and His-133 each coordinate NAD(+). His-133 functions as the Proton acceptor in the catalytic mechanism. Zn(2+)-binding residues include Cys-141, Cys-144, and Cys-166. A Glycyl lysine isopeptide (Lys-Gly) (interchain with G-Cter in ubiquitin) cross-link involves residue Lys-170. A Zn(2+)-binding site is contributed by Cys-177. Gly-214, Ser-216, Asn-240, Gln-242, and Val-258 together coordinate NAD(+). The disordered stretch occupies residues 284–355 (KALPPLPRPP…KRVKAEVTPS (72 aa)). Residues 287–296 (PPLPRPPTPK) show a composition bias toward pro residues. Thr-294 is subject to Phosphothreonine. Phosphoserine occurs at positions 303 and 330.

It belongs to the sirtuin family. Class IV subfamily. In terms of assembly, homodimer; binds to nucleosomes and DNA ends as a homodimer. Interacts with RELA; interferes with RELA binding to target DNA. Interacts with SMARCA5; promoting recruitment of SMARCA5/SNF2H to double-strand breaks (DSBs) sites. Interacts with the mTORC2 complex; preventing the ability of SIRT6 to deacetylate FOXO1. Interacts with the CLOCK-BMAL1 complex; recruited by the CLOCK-BMAL1 complex to regulate expression of clock-controlled genes. Interacts with CSNK2A2; preventing CSNK2A2 localization to the nucleus. In terms of processing, acetylated at Lys-33. Deacetylation at Lys-33 by SIRT1 promotes homomultimerization and binding to double-strand breaks (DSBs) sites. Post-translationally, phosphorylation at Ser-10 by MAPK8/JNK1 in response to oxidative stress stimulates the mono-ADP-ribosyltransferase activity on PARP1, leading to PARP1 recruitment to double-strand breaks (DSBs). Monoubiquitinated at Lys-170 by STUB1/CHIP, preventing its degradation by the proteasome. In terms of processing, sumoylated, leading to specifically decrease ability to deacetylate histone H3 at 'Lys-56' (H3K56ac).

The protein localises to the nucleus. It localises to the chromosome. It is found in the telomere. The protein resides in the endoplasmic reticulum. It catalyses the reaction N(6)-acetyl-L-lysyl-[protein] + NAD(+) + H2O = 2''-O-acetyl-ADP-D-ribose + nicotinamide + L-lysyl-[protein]. The catalysed reaction is N(6)-tetradecanoyl-L-lysyl-[protein] + NAD(+) + H2O = 2''-O-tetradecanoyl-ADP-D-ribose + nicotinamide + L-lysyl-[protein]. It carries out the reaction N(6)-hexadecanoyl-L-lysyl-[protein] + NAD(+) + H2O = 2''-O-hexadecanoyl-ADP-D-ribose + nicotinamide + L-lysyl-[protein]. The enzyme catalyses L-lysyl-[protein] + NAD(+) = N(6)-(ADP-D-ribosyl)-L-lysyl-[protein] + nicotinamide + H(+). It catalyses the reaction L-arginyl-[protein] + NAD(+) = N(omega)-(ADP-D-ribosyl)-L-arginyl-[protein] + nicotinamide + H(+). Its activity is regulated as follows. Compared to the defatty-acylase activity, the protein deacetylase activity is weak in vitro, and requires activation. The histone deacetylase activity is strongly activated upon binding to nucleosomes and chromatin in vivo. Two molecules of SIRT6 associate with the acidic patch of one nucleosome, while the C-terminal disordered region of SIRT6 associates with nucleosomal DNA, leading to efficient histone deacetylation. The protein-lysine deacetylase activity is also activated by long-chain free fatty-acids. In terms of biological role, NAD-dependent protein deacetylase, deacylase and mono-ADP-ribosyltransferase that plays an essential role in DNA damage repair, telomere maintenance, metabolic homeostasis, inflammation, tumorigenesis and aging. Displays protein-lysine deacetylase or defatty-acylase (demyristoylase and depalmitoylase) activity, depending on the context. Acts as a key histone deacetylase by catalyzing deacetylation of histone H3 at 'Lys-9', 'Lys-18' and 'Lys-56' (H3K9ac, H3K18ac and H3K56ac, respectively), suppressing target gene expression of several transcription factors, including NF-kappa-B. Acts as an inhibitor of transcription elongation by mediating deacetylation of H3K9ac and H3K56ac, preventing release of NELFE from chromatin and causing transcriptional pausing. Involved in DNA repair by promoting double-strand break (DSB) repair: acts as a DSB sensor by recognizing and binding DSB sites, leading to (1) recruitment of DNA repair proteins, such as SMARCA5/SNF2H, and (2) deacetylation of histone H3K9ac and H3K56ac. SIRT6 participation to DSB repair is probably involved in extension of life span. Also promotes DNA repair by deacetylating non-histone proteins, such as DDB2 and p53/TP53. Specifically deacetylates H3K18ac at pericentric heterochromatin, thereby maintaining pericentric heterochromatin silencing at centromeres and protecting against genomic instability and cellular senescence. Involved in telomere maintenance by catalyzing deacetylation of histone H3 in telomeric chromatin, regulating telomere position effect and telomere movement in response to DNA damage. Required for embryonic stem cell differentiation by mediating histone deacetylation of H3K9ac. Plays a major role in metabolism by regulating processes such as glycolysis, gluconeogenesis, insulin secretion and lipid metabolism. Inhibits glycolysis via histone deacetylase activity and by acting as a corepressor of the transcription factor HIF1A, thereby controlling the expression of multiple glycolytic genes. Has tumor suppressor activity by repressing glycolysis, thereby inhibiting the Warburg effect. Also regulates glycolysis and tumorigenesis by mediating deacetylation and nuclear export of non-histone proteins, such as isoform M2 of PKM (PKM2). Acts as a negative regulator of gluconeogenesis by mediating deacetylation of non-histone proteins, such as FOXO1 and KAT2A/GCN5. Promotes beta-oxidation of fatty acids during fasting by catalyzing deacetylation of NCOA2, inducing coactivation of PPARA. Acts as a regulator of lipid catabolism in brown adipocytes, both by catalyzing deacetylation of histones and non-histone proteins, such as FOXO1. Also acts as a regulator of circadian rhythms, both by regulating expression of clock-controlled genes involved in lipid and carbohydrate metabolism, and by catalyzing deacetylation of PER2. The defatty-acylase activity is specifically involved in regulation of protein secretion. Has high activity toward long-chain fatty acyl groups and mediates protein-lysine demyristoylation and depalmitoylation of target proteins, such as RRAS2 and TNF, thereby regulating their secretion. Also acts as a mono-ADP-ribosyltransferase by mediating mono-ADP-ribosylation of PARP1, TRIM28/KAP1 or SMARCC2/BAF170. Mono-ADP-ribosyltransferase activity is involved in DNA repair, cellular senescence, repression of LINE-1 retrotransposon elements and regulation of transcription. The sequence is that of NAD-dependent protein deacylase sirtuin-6 from Castor canadensis (American beaver).